The sequence spans 752 residues: ATP-dependent RNA helicase DRS1 (752 aa).

2 disordered regions span residues 1-61 (MVVG…NLDE) and 119-223 (GLVK…TEGD). The segment covering 19 to 34 (DSEDDVPILDSSDDEK) has biased composition (acidic residues). The segment covering 40–51 (TTKKRKGKNNKK) has biased composition (basic residues). Basic and acidic residues predominate over residues 124 to 142 (AHIDSKQEEETEKEKVEKE). 2 stretches are compositionally biased toward acidic residues: residues 167-191 (NQSE…QEEM) and 200-209 (DEIDEEDDSE). Position 208 is a phosphoserine (S208). The short motif at 231–259 (ENFNSLSLSRPVLKGLASLGYVKPSPIQS) is the Q motif element. A Helicase ATP-binding domain is found at 262–437 (IPIALLGKDI…SLSLKKPVRI (176 aa)). An ATP-binding site is contributed by 275–282 (AVTGSGKT). A DEAD box motif is present at residues 385 to 388 (DEAD). A Helicase C-terminal domain is found at 448–639 (KLTQEFVRIR…SMNDTIEDIL (192 aa)). A coiled-coil region spans residues 621–667 (IEETNKLVESMNDTIEDILVEEKEEKEILRAEMQLRKGENMLKHKKE). Residues 673–752 (RRTWFQSESD…NKKKGFKSRR (80 aa)) form a disordered region. Over residues 694–705 (RNKKVTNSKKRK) the composition is skewed to basic residues. The span at 722–734 (TKTDRIADQERTF) shows a compositional bias: basic and acidic residues. Residues 735-752 (KKQKSTNSNKKKGFKSRR) are compositionally biased toward basic residues.

This sequence belongs to the DEAD box helicase family. DDX27/DRS1 subfamily. As to quaternary structure, interacts with RRP1 and associates with pre-ribosomal particles.

The protein localises to the nucleus. It is found in the nucleolus. It carries out the reaction ATP + H2O = ADP + phosphate + H(+). ATP-binding RNA helicase involved in ribosome assembly. The protein is ATP-dependent RNA helicase DRS1 (DRS1) of Saccharomyces cerevisiae (strain ATCC 204508 / S288c) (Baker's yeast).